A 481-amino-acid polypeptide reads, in one-letter code: Cholesterol 16,22-dihydroxylase CYP90G4 (481 aa).

Residues Ser-4–Met-24 form a helical membrane-spanning segment. A heme-binding site is contributed by Cys-426.

This sequence belongs to the cytochrome P450 family. Mainly expressed in leaves and seed pods and, at low levels, in flowers and stems.

It localises to the membrane. It participates in steroid metabolism; cholesterol metabolism. Its function is as follows. Involved in the biosynthesis of spiroketal steroid and saponin natural products from cholesterol such as diosgenin and analogs (e.g. furostanol and spirostanol), plant defense compounds used as main precursors for the industrial production of steroid hormones. During the 5,6-spiroketalization of cholesterol, catalyzes the hydroxylation of cholesterol to form 16S,22S-dihydroxycholesterol and, possibly, the subsequent conversion of 16S,22S-dihydroxycholesterol into 16-oxo-22-hydroxy-cholesterol and 16-hydroxy-22-oxo-cholesterol. 16-hydroxy-22-oxo-cholesterol submit a spontaneous reaction leading to the production of furostanol-type steroid diastereomers, precursors of diosgenin. This is Cholesterol 16,22-dihydroxylase CYP90G4 from Trigonella foenum-graecum (Fenugreek).